The sequence spans 149 residues: Ribonuclease VapC2 (149 aa).

Residues 11–149 form the PINc domain; it reads IFFDSNILIY…RVDFLEIIEI (139 aa). Residues Asp-14 and Asp-116 each coordinate Mg(2+).

The protein belongs to the PINc/VapC protein family. The cofactor is Mg(2+).

Functionally, toxic component of a type II toxin-antitoxin (TA) system. An RNase. Its cognate antitoxin is VapB2. The sequence is that of Ribonuclease VapC2 from Methanocaldococcus jannaschii (strain ATCC 43067 / DSM 2661 / JAL-1 / JCM 10045 / NBRC 100440) (Methanococcus jannaschii).